Reading from the N-terminus, the 294-residue chain is 33 kDa chaperonin (294 aa).

2 disulfides stabilise this stretch: cysteine 238–cysteine 240 and cysteine 271–cysteine 274.

This sequence belongs to the HSP33 family. Post-translationally, under oxidizing conditions two disulfide bonds are formed involving the reactive cysteines. Under reducing conditions zinc is bound to the reactive cysteines and the protein is inactive.

It is found in the cytoplasm. Redox regulated molecular chaperone. Protects both thermally unfolding and oxidatively damaged proteins from irreversible aggregation. Plays an important role in the bacterial defense system toward oxidative stress. The polypeptide is 33 kDa chaperonin (Caldanaerobacter subterraneus subsp. tengcongensis (strain DSM 15242 / JCM 11007 / NBRC 100824 / MB4) (Thermoanaerobacter tengcongensis)).